The sequence spans 360 residues: MKTERVNVNVNNQPYPIYIGENLLQDKSLLQRHVKGRQVMIVSNETIAAFYLDPLKAIYQDFQCDTFILPDGEQYKTLEYWERILHKLASCNHHRDTTLIALGGGVVGDITGFAAACYQRGVDFIQVPTTLLAQVDASIGGKTAVNHPVGKNLIGAFHQPKAVIIDLNTLNTLPEREFKAGMAEIVKAALIKDEKFFTDLENKMSDLLQRNFIFLQAVIKRAAEIKRDIVNADEKERSGERALLNLGHTFAHAIERLLGYGQWLHGEAVSAGLVLAAQLSHRKNLLDFESLQRICRLLTQISLPIHFPKSINADELLSAMYMDKKVANERLHLILLEDLGHAVVSDQVDDRELKSFLENG.

NAD(+) contacts are provided by residues Asp-71–Lys-76, Gly-105–Asp-109, Thr-129–Thr-130, Lys-142, Lys-151, and Thr-169–Thr-172. Residues Glu-184, His-248, and His-265 each contribute to the Zn(2+) site.

Belongs to the sugar phosphate cyclases superfamily. Dehydroquinate synthase family. Requires Co(2+) as cofactor. It depends on Zn(2+) as a cofactor. The cofactor is NAD(+).

It localises to the cytoplasm. The catalysed reaction is 7-phospho-2-dehydro-3-deoxy-D-arabino-heptonate = 3-dehydroquinate + phosphate. It functions in the pathway metabolic intermediate biosynthesis; chorismate biosynthesis; chorismate from D-erythrose 4-phosphate and phosphoenolpyruvate: step 2/7. Functionally, catalyzes the conversion of 3-deoxy-D-arabino-heptulosonate 7-phosphate (DAHP) to dehydroquinate (DHQ). The polypeptide is 3-dehydroquinate synthase (Coxiella burnetii (strain CbuK_Q154) (Coxiella burnetii (strain Q154))).